The following is a 321-amino-acid chain: MVCKVCGQKAQVEMRSRGLALCREHYLDWFVKETERAIRRHRMLLPGERVLVAVSGGKDSLALWDVLSRLGYQAVGLHIELGIGEYSKRSLEVTQAFARERGLELLVVDLKEAYGFGVPELARLSGRVACSACGLSKRYIINQVAVEEGFRVVATGHNLDDEAAVLFGNLLNPQEETLSRQGPVLPEKPGLAARVKPFYRFSEREVLSYTLLRGIRYLHEECPNAKGAKSLLYKEALNLVERSMPGAKLRFLDGFLEKIRPRLDVGEEVALRECERCGYPTTGAVCAFCRMWDAVYRRAKKRKLLPEEVSFRPRVKPLRAG.

Residues Cys3, Cys6, Cys22, and His25 each contribute to the Zn(2+) site. ATP contacts are provided by residues 53 to 55 (AVS), Asp59, and Ile79. Residues Cys130 and Cys133 each contribute to the [4Fe-4S] cluster site. Residue Lys137 forms a Glycyl lysine isopeptide (Lys-Gly) (interchain with G-Cter in TtuB) linkage. Positions 156 and 161 each coordinate ATP. Cys222 serves as a coordination point for [4Fe-4S] cluster. Glycyl lysine isopeptide (Lys-Gly) (interchain with G-Cter in TtuB) cross-links involve residues Lys226 and Lys229. Residues Cys274, Cys277, Cys286, and Cys289 each contribute to the Zn(2+) site.

This sequence belongs to the TtcA family. TtuA subfamily. Homodimer. Is able to form a heterocomplex with TtuB. It depends on [4Fe-4S] cluster as a cofactor. Requires Mg(2+) as cofactor. In terms of processing, conjugated to TtuB via covalent linkages involving Lys-137, Lys-226 and Lys-229.

The catalysed reaction is [TtuB sulfur-carrier protein]-C-terminal-Gly-aminoethanethioate + 5-methyluridine(54) in tRNA + ATP + H2O = [TtuB sulfur-carrier protein]-C-terminal Gly-Gly + 5-methyl-2-thiouridine(54) in tRNA + AMP + diphosphate + H(+). The protein operates within tRNA modification. With respect to regulation, enzymatic activity may be regulated by TtuB conjugation. Its function is as follows. Catalyzes the ATP-dependent 2-thiolation of 5-methyluridine residue at position 54 in the T loop of tRNAs, leading to 5-methyl-2-thiouridine (m(5)s(2)U or s(2)T). This modification allows thermal stabilization of tRNAs in thermophilic microorganisms, and is required for cell growth at high temperatures. TtuA transfers the S atom from the thiocarboxylated C-terminus of TtuB to tRNA. This chain is tRNA-5-methyluridine(54) 2-sulfurtransferase, found in Thermus thermophilus (strain ATCC BAA-163 / DSM 7039 / HB27).